The following is a 404-amino-acid chain: Voltage-gated potassium channel subunit beta-3 (404 aa).

The span at 1 to 14 shows a compositional bias: polar residues; the sequence is MQVSIACTEQNLRS. The segment at 1-78 is disordered; the sequence is MQVSIACTEQ…RESTGRGTGM (78 aa). Gly residues predominate over residues 28-50; the sequence is PGGGNGGPVGGGHGNPPGGGGLG. 4 residues coordinate NADP(+): T97, W98, Q104, and D126. Y131 acts as the Proton donor/acceptor in catalysis. Residues N199, S229, R230, Q255, W284, S285, P286, L287, A288, C289, K295, K305, G364, S366, Q370, and E373 each contribute to the NADP(+) site.

The protein belongs to the shaker potassium channel beta subunit family. In terms of assembly, forms heteromultimeric complex with alpha subunits. Interacts with KCNA5 and KCNB2. In terms of tissue distribution, predominantly expressed in brain. Strongest expression in olfactory bulb and thalamic nuclei. Not detected in heart, spleen, lung, liver, skeletal muscle, kidney and testis.

Its subcellular location is the cytoplasm. Functionally, regulatory subunit of the voltage-gated potassium (Kv) channels composed of pore-forming and potassium-conducting alpha subunits and of regulatory beta subunits. The beta-3/KCNAB3 subunit may mediate closure of potassium channels. Inactivates Kv1.4/KCNA4 alpha subunit-containing Kv channel current but not Kv1.1/KCNA1 or Kv1.5/KCNA5 channels. May display nicotinamide adenine dinucleotide phosphate (NADPH)-dependent aldoketoreductase activity. The binding of oxidized and reduced NADP(H) cofactors may be required for the regulation of potassium channel activity. The protein is Voltage-gated potassium channel subunit beta-3 of Rattus norvegicus (Rat).